The following is an 858-amino-acid chain: Leucine--tRNA ligase (858 aa).

The 'HIGH' region signature appears at Pro43–His54. The 'KMSKS' region signature appears at Lys629–Ser633. Lys632 provides a ligand contact to ATP.

The protein belongs to the class-I aminoacyl-tRNA synthetase family.

It localises to the cytoplasm. The catalysed reaction is tRNA(Leu) + L-leucine + ATP = L-leucyl-tRNA(Leu) + AMP + diphosphate. This is Leucine--tRNA ligase from Treponema denticola (strain ATCC 35405 / DSM 14222 / CIP 103919 / JCM 8153 / KCTC 15104).